Reading from the N-terminus, the 275-residue chain is Large ribosomal subunit protein uL2c (275 aa).

2 disordered regions span residues 1-30 (MAIH…QKQK) and 225-275 (MNPV…RRRK). Positions 21–30 (QAKSTPQKQK) are enriched in polar residues.

This sequence belongs to the universal ribosomal protein uL2 family. Part of the 50S ribosomal subunit.

It localises to the plastid. It is found in the chloroplast. In Illicium oligandrum (Star anise), this protein is Large ribosomal subunit protein uL2c (rpl2).